Consider the following 598-residue polypeptide: Eukaryotic translation initiation factor 3 subunit D (598 aa).

The disordered stretch occupies residues 104-178 (VKTRGFGRGG…YDKPQRNRDS (75 aa)). Positions 109–132 (FGRGGGTIFRGRGQRGGAQRGRGG) are enriched in gly residues. A compositionally biased stretch (basic and acidic residues) spans 165 to 177 (GWKDYDKPQRNRD). The interval 304 to 318 (SIDLVTVNENAADAP) is RNA gate. Residues 574-598 (NTFEEEDDTGAKAEKDEESEEKDEE) form a disordered region. Over residues 589-598 (DEESEEKDEE) the composition is skewed to acidic residues.

This sequence belongs to the eIF-3 subunit D family. Component of the eukaryotic translation initiation factor 3 (eIF-3) complex.

Its subcellular location is the cytoplasm. In terms of biological role, mRNA cap-binding component of the eukaryotic translation initiation factor 3 (eIF-3) complex, which is involved in protein synthesis of a specialized repertoire of mRNAs and, together with other initiation factors, stimulates binding of mRNA and methionyl-tRNAi to the 40S ribosome. The eIF-3 complex specifically targets and initiates translation of a subset of mRNAs involved in cell proliferation. In the eIF-3 complex, eif3d specifically recognizes and binds the 7-methylguanosine cap of a subset of mRNAs. The protein is Eukaryotic translation initiation factor 3 subunit D of Coccidioides immitis (strain RS) (Valley fever fungus).